The sequence spans 449 residues: Elongation factor 1-alpha C (449 aa).

A tr-type G domain is found at 5–234 (KQHVSIVVIG…DACDPPKRPV (230 aa)). Residues 14-21 (GHVDSGKS) are G1. Residue 14 to 21 (GHVDSGKS) participates in GTP binding. Lys-55 bears the N6,N6-dimethyllysine mark. The segment at 70 to 74 (GITID) is G2. Lys-79 is subject to N6,N6,N6-trimethyllysine. The G3 stretch occupies residues 91–94 (DAPG). Residues 91–95 (DAPGH) and 153–156 (NKMD) each bind GTP. The segment at 153 to 156 (NKMD) is G4. Lys-187 carries the N6,N6,N6-trimethyllysine modification. Residues 194-196 (SGW) form a G5 region. An N6-methyllysine modification is found at Lys-265. An N6,N6,N6-trimethyllysine mark is found at Lys-310 and Lys-400.

Belongs to the TRAFAC class translation factor GTPase superfamily. Classic translation factor GTPase family. EF-Tu/EF-1A subfamily.

Its subcellular location is the cytoplasm. In terms of biological role, this protein promotes the GTP-dependent binding of aminoacyl-tRNA to the A-site of ribosomes during protein biosynthesis. The protein is Elongation factor 1-alpha C (TEF-C) of Porphyra purpurea (Red seaweed).